A 302-amino-acid polypeptide reads, in one-letter code: Glutaminase (302 aa).

Substrate contacts are provided by Ser-61, Asn-111, Glu-155, Asn-162, Tyr-186, Tyr-238, and Val-256.

Belongs to the glutaminase family. Homotetramer.

The enzyme catalyses L-glutamine + H2O = L-glutamate + NH4(+). The sequence is that of Glutaminase from Stutzerimonas stutzeri (strain A1501) (Pseudomonas stutzeri).